A 30-amino-acid polypeptide reads, in one-letter code: Toxic protein AapA1 (30 aa).

Belongs to the AapA toxin family.

It localises to the cell inner membrane. With respect to regulation, transcription of the aapA1 gene generates a full-length transcript whose folding impedes translation. Processing of the 3' end of the aapA1 message generates a shorter transcript that becomes translatable after a structural rearrangement. The processing also makes it more susceptible to forming dsRNA with IsoA1 which leads to duplex RNA degradation by RNase 3 (rnc). May be involved in response to oxidative stress. Toxic component of a type I toxin-antitoxin (TA) system. When overexpression is induced in situ in the absence of its cognate antisense RNA antitoxin IsoA1 it leads to cell growth arrest and cell death without lysis. Neutralized by IsoA1 RNA which forms an extensive duplex with the mRNA. Binds artificial prokaryotic and eukaryotic lipid membranes, with 30-fold higher affinity for prokaryotic membranes. Molecular dynamics suggests the peptide penetrates the membrane leading to lipid reorganization and thinning of the bilayer. Induction of toxin in the absence of antitoxin RNA causes a fast conversion of cells from spiral-shaped to coccoid forms; cells have no visible membrane defects and resemble wild-type 'aging coccoids'. Toxin causes a moderate decrease in membrane potential and ATP content and alterations in peptidoglycan muropeptide abundance; GlcNAc-MurNAc dipeptides increase while GlcNAc-MurNAc tripeptides decrease (i.e. a faster phenocopy of cell aging). Deletion of all 6 AapA/IsoA TA loci in strain B128 leads to slower than wild-type conversion of H2O2-treated cells to the coccoid form. This suggests oxidative stress triggers coccoid transformation via these type I TA systems, although other factors eventually drive the morphology change. The chain is Toxic protein AapA1 from Helicobacter pylori (strain ATCC 700392 / 26695) (Campylobacter pylori).